Here is a 340-residue protein sequence, read N- to C-terminus: MLPSAVAAHAGAYWDVVASSSLLNFPAAPGFGNLGKSFLIENLLRAGGAPPLGLPPPQHHGSAAALGAGAQVRSLPASPVPLKLCPAAEPVSPGGAPYGTRWAFQVLSPSADGARLPGRAPGDPDCAFQPPAPAPSKPFFLSAPPFYSACCGGSCRRPASPTAFAREESVLPLLTQESTSKVRRGILRRAVFSEDQRKALEKMFQKQKYISKTDRKKLAINLGLKESQVKIWFQNRRMKWRNSKEKEVLSNRCLQEVVLQEDPLSRSALGFPSPCASLWEVSQQHPSPGWRENSPEPSERLIQGSPGAEALPPEAKSLQGALYLCSEEDARDKNALTGTV.

A DNA-binding region (homeobox) is located at residues 185 to 244 (GILRRAVFSEDQRKALEKMFQKQKYISKTDRKKLAINLGLKESQVKIWFQNRRMKWRNSK). The disordered stretch occupies residues 283 to 313 (QQHPSPGWRENSPEPSERLIQGSPGAEALPP).

The protein belongs to the H2.0 homeobox family.

It is found in the nucleus. This is Homeobox protein DBX2 (DBX2) from Bos taurus (Bovine).